The chain runs to 238 residues: DNA repair protein RecO (238 aa).

The protein belongs to the RecO family.

Its function is as follows. Involved in DNA repair and RecF pathway recombination. The chain is DNA repair protein RecO from Cereibacter sphaeroides (strain ATCC 17023 / DSM 158 / JCM 6121 / CCUG 31486 / LMG 2827 / NBRC 12203 / NCIMB 8253 / ATH 2.4.1.) (Rhodobacter sphaeroides).